Reading from the N-terminus, the 261-residue chain is Phosphonates import ATP-binding protein PhnC (261 aa).

The region spanning 15 to 257 is the ABC transporter domain; that stretch reads LCLENTSAVY…LERSAIPPKR (243 aa). Residue 48 to 55 participates in ATP binding; it reads GPSGSGKS.

The protein belongs to the ABC transporter superfamily. Phosphonates importer (TC 3.A.1.9.1) family. In terms of assembly, the complex is composed of two ATP-binding proteins (PhnC), two transmembrane proteins (PhnE) and a solute-binding protein (PhnD).

Its subcellular location is the cell inner membrane. It catalyses the reaction phosphonate(out) + ATP + H2O = phosphonate(in) + ADP + phosphate + H(+). Its function is as follows. Part of the ABC transporter complex PhnCDE involved in phosphonates import. Responsible for energy coupling to the transport system. This chain is Phosphonates import ATP-binding protein PhnC, found in Hyphomonas neptunium (strain ATCC 15444).